The sequence spans 367 residues: Heat-inducible transcription repressor HrcA (367 aa).

It belongs to the HrcA family.

Functionally, negative regulator of class I heat shock genes (grpE-dnaK-dnaJ and groELS operons). Prevents heat-shock induction of these operons. The sequence is that of Heat-inducible transcription repressor HrcA from Acaryochloris marina (strain MBIC 11017).